A 255-amino-acid chain; its full sequence is 1-(5-phosphoribosyl)-5-[(5-phosphoribosylamino)methylideneamino] imidazole-4-carboxamide isomerase (255 aa).

Aspartate 8 serves as the catalytic Proton acceptor. Residue aspartate 129 is the Proton donor of the active site.

Belongs to the HisA/HisF family.

It is found in the cytoplasm. The enzyme catalyses 1-(5-phospho-beta-D-ribosyl)-5-[(5-phospho-beta-D-ribosylamino)methylideneamino]imidazole-4-carboxamide = 5-[(5-phospho-1-deoxy-D-ribulos-1-ylimino)methylamino]-1-(5-phospho-beta-D-ribosyl)imidazole-4-carboxamide. It functions in the pathway amino-acid biosynthesis; L-histidine biosynthesis; L-histidine from 5-phospho-alpha-D-ribose 1-diphosphate: step 4/9. This is 1-(5-phosphoribosyl)-5-[(5-phosphoribosylamino)methylideneamino] imidazole-4-carboxamide isomerase from Prochlorococcus marinus subsp. pastoris (strain CCMP1986 / NIES-2087 / MED4).